The sequence spans 329 residues: GTP 3',8-cyclase (329 aa).

The Radical SAM core domain occupies 8–234; that stretch reads AFARKFYYLR…QLRQRSDGPA (227 aa). Arginine 17 lines the GTP pocket. Cysteine 24 and cysteine 28 together coordinate [4Fe-4S] cluster. Tyrosine 30 lines the S-adenosyl-L-methionine pocket. [4Fe-4S] cluster is bound at residue cysteine 31. Arginine 68 contacts GTP. Glycine 72 contributes to the S-adenosyl-L-methionine binding site. Threonine 99 provides a ligand contact to GTP. Serine 123 contacts S-adenosyl-L-methionine. Lysine 160 is a binding site for GTP. Methionine 194 lines the S-adenosyl-L-methionine pocket. [4Fe-4S] cluster contacts are provided by cysteine 257 and cysteine 260. Residue 262 to 264 coordinates GTP; sequence RLR. Cysteine 274 provides a ligand contact to [4Fe-4S] cluster.

The protein belongs to the radical SAM superfamily. MoaA family. As to quaternary structure, monomer and homodimer. The cofactor is [4Fe-4S] cluster.

The enzyme catalyses GTP + AH2 + S-adenosyl-L-methionine = (8S)-3',8-cyclo-7,8-dihydroguanosine 5'-triphosphate + 5'-deoxyadenosine + L-methionine + A + H(+). Its pathway is cofactor biosynthesis; molybdopterin biosynthesis. Catalyzes the cyclization of GTP to (8S)-3',8-cyclo-7,8-dihydroguanosine 5'-triphosphate. This Escherichia coli O139:H28 (strain E24377A / ETEC) protein is GTP 3',8-cyclase.